A 349-amino-acid chain; its full sequence is Protein-glutamate methylesterase/protein-glutamine glutaminase 3 (349 aa).

Positions 2–119 (DVLIVDDSPV…HPDFERDVES (118 aa)) constitute a Response regulatory domain. D52 carries the post-translational modification 4-aspartylphosphate. Positions 157–340 (EGFQPGVIAI…LSPPRIAALL (184 aa)) constitute a CheB-type methylesterase domain. Catalysis depends on residues S169, H196, and D289.

This sequence belongs to the CheB family. In terms of processing, phosphorylated by CheA. Phosphorylation of the N-terminal regulatory domain activates the methylesterase activity.

Its subcellular location is the cytoplasm. It carries out the reaction [protein]-L-glutamate 5-O-methyl ester + H2O = L-glutamyl-[protein] + methanol + H(+). It catalyses the reaction L-glutaminyl-[protein] + H2O = L-glutamyl-[protein] + NH4(+). In terms of biological role, involved in chemotaxis. Part of a chemotaxis signal transduction system that modulates chemotaxis in response to various stimuli. Catalyzes the demethylation of specific methylglutamate residues introduced into the chemoreceptors (methyl-accepting chemotaxis proteins or MCP) by CheR. Also mediates the irreversible deamidation of specific glutamine residues to glutamic acid. The sequence is that of Protein-glutamate methylesterase/protein-glutamine glutaminase 3 from Hahella chejuensis (strain KCTC 2396).